The sequence spans 333 residues: Tetraacyldisaccharide 4'-kinase (333 aa).

57-64 contributes to the ATP binding site; the sequence is IVGGAGKT.

It belongs to the LpxK family.

It carries out the reaction a lipid A disaccharide + ATP = a lipid IVA + ADP + H(+). The protein operates within glycolipid biosynthesis; lipid IV(A) biosynthesis; lipid IV(A) from (3R)-3-hydroxytetradecanoyl-[acyl-carrier-protein] and UDP-N-acetyl-alpha-D-glucosamine: step 6/6. In terms of biological role, transfers the gamma-phosphate of ATP to the 4'-position of a tetraacyldisaccharide 1-phosphate intermediate (termed DS-1-P) to form tetraacyldisaccharide 1,4'-bis-phosphate (lipid IVA). The chain is Tetraacyldisaccharide 4'-kinase from Dechloromonas aromatica (strain RCB).